The chain runs to 369 residues: Peptide chain release factor 2 (369 aa).

Gln249 bears the N5-methylglutamine mark.

It belongs to the prokaryotic/mitochondrial release factor family. Methylated by PrmC. Methylation increases the termination efficiency of RF2.

It localises to the cytoplasm. Peptide chain release factor 2 directs the termination of translation in response to the peptide chain termination codons UGA and UAA. This Corynebacterium diphtheriae (strain ATCC 700971 / NCTC 13129 / Biotype gravis) protein is Peptide chain release factor 2.